The following is a 142-amino-acid chain: Large-conductance mechanosensitive channel (142 aa).

The next 3 membrane-spanning stretches (helical) occupy residues 19-39 (VGIIIGAAFTAIVSSLVADLV), 41-61 (PFIALFTGGIDFSGWFYALDG), and 78-98 (FAFGNFIMAVINFLIIAFVVF).

Belongs to the MscL family. In terms of assembly, homopentamer.

The protein resides in the cell inner membrane. In terms of biological role, channel that opens in response to stretch forces in the membrane lipid bilayer. May participate in the regulation of osmotic pressure changes within the cell. The polypeptide is Large-conductance mechanosensitive channel (Roseobacter denitrificans (strain ATCC 33942 / OCh 114) (Erythrobacter sp. (strain OCh 114))).